The chain runs to 122 residues: Large ribosomal subunit protein uL18 (122 aa).

Belongs to the universal ribosomal protein uL18 family. Part of the 50S ribosomal subunit; part of the 5S rRNA/L5/L18/L25 subcomplex. Contacts the 5S and 23S rRNAs.

This is one of the proteins that bind and probably mediate the attachment of the 5S RNA into the large ribosomal subunit, where it forms part of the central protuberance. This Fervidobacterium nodosum (strain ATCC 35602 / DSM 5306 / Rt17-B1) protein is Large ribosomal subunit protein uL18.